The following is a 263-amino-acid chain: Hydroxyethylthiazole kinase 1 (263 aa).

A substrate-binding site is contributed by Met-42. ATP contacts are provided by Lys-118 and Thr-164. A substrate-binding site is contributed by Gly-191.

It belongs to the Thz kinase family. Mg(2+) serves as cofactor.

It carries out the reaction 5-(2-hydroxyethyl)-4-methylthiazole + ATP = 4-methyl-5-(2-phosphooxyethyl)-thiazole + ADP + H(+). The protein operates within cofactor biosynthesis; thiamine diphosphate biosynthesis; 4-methyl-5-(2-phosphoethyl)-thiazole from 5-(2-hydroxyethyl)-4-methylthiazole: step 1/1. In terms of biological role, catalyzes the phosphorylation of the hydroxyl group of 4-methyl-5-beta-hydroxyethylthiazole (THZ). The protein is Hydroxyethylthiazole kinase 1 of Clostridium botulinum (strain 657 / Type Ba4).